Here is a 334-residue protein sequence, read N- to C-terminus: Putative fatty acid elongase 1 (334 aa).

Residues 1 to 51 (MDLTGAHMLKIHRPSIDHPFGVDLWHLFEQLSIKTIGWNPSEFEYIPGKTP) are Lumenal-facing. The chain crosses the membrane as a helical span at residues 52 to 72 (MSQWSSVIVSITAYYVIILSG). Topologically, residues 73–86 (RAIMTNRKPLKQRR) are cytoplasmic. Residues 87–107 (LFQLHNFILTIISGALLALLV) form a helical membrane-spanning segment. Residues 108-135 (EEVFRNYMRNGLFYCVCDSRHFTQRLVT) lie on the Lumenal side of the membrane. Residues 136–156 (LYYLNYLTKYLELMDTVFLFL) form a helical membrane-spanning segment. Residues 157–160 (KKKP) lie on the Cytoplasmic side of the membrane. The chain crosses the membrane as a helical span at residues 161–181 (LAFLHCYHHGITALLCFTQLL). At 182 to 187 (GRTSVQ) the chain is on the lumenal side. A helical membrane pass occupies residues 188-208 (WGVIGLNLYVHVIMYSYYFLA). Over 209–224 (ACGRRVWWKQWVTRVQ) the chain is Cytoplasmic. The chain crosses the membrane as a helical span at residues 225–245 (IIQFVLDLILCYFGTYSHIAF). The Lumenal portion of the chain corresponds to 246–260 (RYFPWLPHVGDCSGS). The helical transmembrane segment at 261 to 281 (LFAAFFGCGVLSSYLFLFIGF) threads the bilayer. Over 282 to 334 (YINTYIKRGAKKNQRKAAGKADNTSVAAAAGSEALAATTATNASPFSARSRKL) the chain is Cytoplasmic. Ser325 carries the post-translational modification Phosphoserine.

Belongs to the ELO family.

The protein resides in the endoplasmic reticulum membrane. The enzyme catalyses a very-long-chain acyl-CoA + malonyl-CoA + H(+) = a very-long-chain 3-oxoacyl-CoA + CO2 + CoA. May be involved in the synthesis of very long chain fatty acids. The chain is Putative fatty acid elongase 1 from Schizosaccharomyces pombe (strain 972 / ATCC 24843) (Fission yeast).